A 363-amino-acid chain; its full sequence is Phospho-N-acetylmuramoyl-pentapeptide-transferase (363 aa).

11 consecutive transmembrane segments (helical) span residues 4–24, 28–48, 72–92, 96–116, 129–149, 169–189, 200–220, 241–261, 266–286, 294–314, and 342–362; these read NLLV…NVIV, IAIL…IKYF, TPTM…LMLA, NIYV…GLID, INAT…CMIV, LTID…IGSS, GLVT…CYLA, ELTV…WYNI, IFMG…ISVI, GIIG…IYSI, and IVSR…SSLI.

This sequence belongs to the glycosyltransferase 4 family. MraY subfamily. Mg(2+) serves as cofactor.

Its subcellular location is the cell inner membrane. It catalyses the reaction UDP-N-acetyl-alpha-D-muramoyl-L-alanyl-gamma-D-glutamyl-meso-2,6-diaminopimeloyl-D-alanyl-D-alanine + di-trans,octa-cis-undecaprenyl phosphate = di-trans,octa-cis-undecaprenyl diphospho-N-acetyl-alpha-D-muramoyl-L-alanyl-D-glutamyl-meso-2,6-diaminopimeloyl-D-alanyl-D-alanine + UMP. It participates in cell wall biogenesis; peptidoglycan biosynthesis. In terms of biological role, catalyzes the initial step of the lipid cycle reactions in the biosynthesis of the cell wall peptidoglycan: transfers peptidoglycan precursor phospho-MurNAc-pentapeptide from UDP-MurNAc-pentapeptide onto the lipid carrier undecaprenyl phosphate, yielding undecaprenyl-pyrophosphoryl-MurNAc-pentapeptide, known as lipid I. The sequence is that of Phospho-N-acetylmuramoyl-pentapeptide-transferase from Orientia tsutsugamushi (strain Ikeda) (Rickettsia tsutsugamushi).